The following is an 80-amino-acid chain: Bowman-Birk type proteinase inhibitor DE-4 (80 aa).

Over residues 1 to 10 (DDDHSDDEPR) the composition is skewed to acidic residues. The segment at 1-29 (DDDHSDDEPRESESSKPCCSSCCTRSRPP) is disordered. The segment covering 15-29 (SKPCCSSCCTRSRPP) has biased composition (low complexity). Intrachain disulfides connect C18–C71, C19–C33, C22–C67, C23–C31, C41–C48, C45–C60, and C50–C58.

It belongs to the Bowman-Birk serine protease inhibitor family.

This chain is Bowman-Birk type proteinase inhibitor DE-4, found in Philenoptera violacea (Apple-leaf).